A 953-amino-acid polypeptide reads, in one-letter code: Zinc finger protein 618 (953 aa).

Position 1 is an N-acetylmethionine (M1). The tract at residues 1–56 (MSQPDGAAAPQVDGASAPGRKSAVNRERLKRSQKSSKVEGPEPVPAEASLSAEQGT) is disordered. Residues K63 and K81 each participate in a glycyl lysine isopeptide (Lys-Gly) (interchain with G-Cter in SUMO2) cross-link. 2 C2H2-type zinc fingers span residues 146 to 168 (YECG…VRAH) and 187 to 209 (YTCD…RDLH). A Glycyl lysine isopeptide (Lys-Gly) (interchain with G-Cter in SUMO2) cross-link involves residue K238. The segment at 255–277 (YTCEFCGKQYKYYTPYQEHVALH) adopts a C2H2-type 3 zinc-finger fold. 2 disordered regions span residues 283-305 (APGW…EVTP) and 337-390 (TPPA…SSEP). The span at 339-354 (PATQTQTFRAPNSGSP) shows a compositional bias: polar residues. Residues 365-379 (FSRRVESKAQNHFEE) are compositionally biased toward basic and acidic residues. The C2H2-type 4 zinc finger occupies 391–413 (YTCGACGIQFQFYSNLLEHMQSH). The segment covering 419–428 (NNITSNQSRS) has biased composition (polar residues). A disordered region spans residues 419–461 (NNITSNQSRSPPAAVEEKWKPQAQRNSANNTTTSGLTPNSVIP). K436 is covalently cross-linked (Glycyl lysine isopeptide (Lys-Gly) (interchain with G-Cter in SUMO2)). Polar residues predominate over residues 441-458 (AQRNSANNTTTSGLTPNS).

Belongs to the krueppel C2H2-type zinc-finger protein family. As to quaternary structure, interacts with UHRF2.

The protein resides in the nucleus. The protein localises to the chromosome. Functionally, regulates UHRF2 function as a specific 5-hydroxymethylcytosine (5hmC) reader by regulating its chromatin localization. In Mus musculus (Mouse), this protein is Zinc finger protein 618 (Znf618).